Reading from the N-terminus, the 447-residue chain is Zinc finger protein ZIC 1 (447 aa).

The C2H2-type 1; atypical zinc finger occupies 225 to 260; sequence LICKWIEPEQLANPKKSCNKTFSTMHELVTHVTVEH. The C2H2-type 2; atypical zinc-finger motif lies at 269–296; sequence HICFWEECPREGKPFKAKYKLVNHIRVH. 3 C2H2-type zinc fingers span residues 302–326, 332–356, and 362–384; these read FPCP…KRTH, FKCE…MHVH, and YLCK…MKVH. Residues 375–431 form a disordered region; sequence SSLRKHMKVHESSSQGSQPSPAASSGYESSTPPTIVSPSTDNPTTSSLSPSSSAVHH. Residues 386 to 427 show a composition bias toward low complexity; that stretch reads SSSQGSQPSPAASSGYESSTPPTIVSPSTDNPTTSSLSPSSS.

This sequence belongs to the GLI C2H2-type zinc-finger protein family. As to quaternary structure, interacts (via the C2H2-type domains 3, 4 and 5) with MDFIC (via the C2H2-type domains 3, 4 and 5). Interacts with GLI1; the interaction enhances transcription activation. Interacts with GLI2. Interacts with GLI3; the interaction enhances transcription activation. In terms of tissue distribution, CNS. A high level expression is seen in the cerebellum. Detected in the nuclei of the cerebellar granule cell lineage from the progenitor cells of the external germinal layer to the postmigrated cells of the internal granular layer. Detected in medulloblastoma (26/29 cases), but not present in all other tumors examined.

The protein resides in the nucleus. Its subcellular location is the cytoplasm. Functionally, acts as a transcriptional activator. Involved in neurogenesis. Plays important roles in the early stage of organogenesis of the CNS, as well as during dorsal spinal cord development and maturation of the cerebellum. Involved in the spatial distribution of mossy fiber (MF) neurons within the pontine gray nucleus (PGN). Plays a role in the regulation of MF axon pathway choice. Promotes MF migration towards ipsilaterally-located cerebellar territories. May have a role in shear flow mechanotransduction in osteocytes. Retains nuclear GLI1 and GLI3 in the cytoplasm. Binds to the minimal GLI-consensus sequence 5'-TGGGTGGTC-3'. In Homo sapiens (Human), this protein is Zinc finger protein ZIC 1 (ZIC1).